Here is a 1316-residue protein sequence, read N- to C-terminus: DNA-directed RNA polymerase subunit beta' (1316 aa).

Residues Cys-60, Cys-62, Cys-75, and Cys-78 each contribute to the Zn(2+) site. 3 residues coordinate Mg(2+): Asp-535, Asp-537, and Asp-539. 4 residues coordinate Zn(2+): Cys-891, Cys-968, Cys-975, and Cys-978.

This sequence belongs to the RNA polymerase beta' chain family. In terms of assembly, the RNAP catalytic core consists of 2 alpha, 1 beta, 1 beta' and 1 omega subunit. When a sigma factor is associated with the core the holoenzyme is formed, which can initiate transcription. The cofactor is Mg(2+). Zn(2+) serves as cofactor.

The enzyme catalyses RNA(n) + a ribonucleoside 5'-triphosphate = RNA(n+1) + diphosphate. Functionally, DNA-dependent RNA polymerase catalyzes the transcription of DNA into RNA using the four ribonucleoside triphosphates as substrates. This Mycobacterium tuberculosis (strain ATCC 25177 / H37Ra) protein is DNA-directed RNA polymerase subunit beta'.